Here is a 366-residue protein sequence, read N- to C-terminus: tRNA 2-selenouridine synthase (366 aa).

One can recognise a Rhodanese domain in the interval 12–135 (FLNDVPMMDA…MRTFLLDTLH (124 aa)). The S-selanylcysteine intermediate role is filled by Cys95.

The protein belongs to the SelU family. Monomer.

The catalysed reaction is 5-methylaminomethyl-2-thiouridine(34) in tRNA + selenophosphate + (2E)-geranyl diphosphate + H2O + H(+) = 5-methylaminomethyl-2-selenouridine(34) in tRNA + (2E)-thiogeraniol + phosphate + diphosphate. The enzyme catalyses 5-methylaminomethyl-2-thiouridine(34) in tRNA + (2E)-geranyl diphosphate = 5-methylaminomethyl-S-(2E)-geranyl-thiouridine(34) in tRNA + diphosphate. It carries out the reaction 5-methylaminomethyl-S-(2E)-geranyl-thiouridine(34) in tRNA + selenophosphate + H(+) = 5-methylaminomethyl-2-(Se-phospho)selenouridine(34) in tRNA + (2E)-thiogeraniol. It catalyses the reaction 5-methylaminomethyl-2-(Se-phospho)selenouridine(34) in tRNA + H2O = 5-methylaminomethyl-2-selenouridine(34) in tRNA + phosphate. Functionally, involved in the post-transcriptional modification of the uridine at the wobble position (U34) of tRNA(Lys), tRNA(Glu) and tRNA(Gln). Catalyzes the conversion of 2-thiouridine (S2U-RNA) to 2-selenouridine (Se2U-RNA). Acts in a two-step process involving geranylation of 2-thiouridine (S2U) to S-geranyl-2-thiouridine (geS2U) and subsequent selenation of the latter derivative to 2-selenouridine (Se2U) in the tRNA chain. This chain is tRNA 2-selenouridine synthase, found in Pseudomonas syringae pv. tomato (strain ATCC BAA-871 / DC3000).